The sequence spans 183 residues: TATA-box-binding protein (183 aa).

Tandem repeats lie at residues 7 to 83 (IENV…ARTL) and 99 to 177 (VQNI…RQQL).

The protein belongs to the TBP family.

Its function is as follows. General factor that plays a role in the activation of archaeal genes transcribed by RNA polymerase. Binds specifically to the TATA box promoter element which lies close to the position of transcription initiation. This chain is TATA-box-binding protein, found in Methanothrix thermoacetophila (strain DSM 6194 / JCM 14653 / NBRC 101360 / PT) (Methanosaeta thermophila).